A 227-amino-acid polypeptide reads, in one-letter code: 6-phosphogluconolactonase (227 aa).

The protein belongs to the glucosamine/galactosamine-6-phosphate isomerase family. 6-phosphogluconolactonase subfamily.

The catalysed reaction is 6-phospho-D-glucono-1,5-lactone + H2O = 6-phospho-D-gluconate + H(+). Its pathway is carbohydrate degradation; pentose phosphate pathway; D-ribulose 5-phosphate from D-glucose 6-phosphate (oxidative stage): step 2/3. Functionally, hydrolysis of 6-phosphogluconolactone to 6-phosphogluconate. The polypeptide is 6-phosphogluconolactonase (pgl) (Helicobacter pylori (strain J99 / ATCC 700824) (Campylobacter pylori J99)).